A 430-amino-acid polypeptide reads, in one-letter code: ATP-dependent protease ATPase subunit HslU (430 aa).

ATP is bound by residues Val18, 60–65 (GVGKTE), Asp243, Glu308, and Arg380.

It belongs to the ClpX chaperone family. HslU subfamily. A double ring-shaped homohexamer of HslV is capped on each side by a ring-shaped HslU homohexamer. The assembly of the HslU/HslV complex is dependent on binding of ATP.

The protein resides in the cytoplasm. Its function is as follows. ATPase subunit of a proteasome-like degradation complex; this subunit has chaperone activity. The binding of ATP and its subsequent hydrolysis by HslU are essential for unfolding of protein substrates subsequently hydrolyzed by HslV. HslU recognizes the N-terminal part of its protein substrates and unfolds these before they are guided to HslV for hydrolysis. The sequence is that of ATP-dependent protease ATPase subunit HslU from Caulobacter vibrioides (strain ATCC 19089 / CIP 103742 / CB 15) (Caulobacter crescentus).